A 330-amino-acid polypeptide reads, in one-letter code: Aspartate--ammonia ligase (330 aa).

Belongs to the class-II aminoacyl-tRNA synthetase family. AsnA subfamily.

The protein resides in the cytoplasm. It carries out the reaction L-aspartate + NH4(+) + ATP = L-asparagine + AMP + diphosphate + H(+). The protein operates within amino-acid biosynthesis; L-asparagine biosynthesis; L-asparagine from L-aspartate (ammonia route): step 1/1. This chain is Aspartate--ammonia ligase, found in Serratia proteamaculans (strain 568).